We begin with the raw amino-acid sequence, 510 residues long: Arginine biosynthesis bifunctional protein ArgJ, chloroplastic (510 aa).

Positions 223, 249, 359, 505, and 510 each coordinate substrate.

It belongs to the ArgJ family. Heterodimer of an alpha and a beta chain.

The protein localises to the plastid. Its subcellular location is the chloroplast. It carries out the reaction N(2)-acetyl-L-ornithine + L-glutamate = N-acetyl-L-glutamate + L-ornithine. The catalysed reaction is L-glutamate + acetyl-CoA = N-acetyl-L-glutamate + CoA + H(+). The protein operates within amino-acid biosynthesis; L-arginine biosynthesis; L-ornithine and N-acetyl-L-glutamate from L-glutamate and N(2)-acetyl-L-ornithine (cyclic): step 1/1. Its pathway is amino-acid biosynthesis; L-arginine biosynthesis; N(2)-acetyl-L-ornithine from L-glutamate: step 1/4. Functionally, catalyzes two activities which are involved in the cyclic version of arginine biosynthesis: the synthesis of acetylglutamate from glutamate and acetyl-CoA, and of ornithine by transacetylation between acetylornithine and glutamate. The protein is Arginine biosynthesis bifunctional protein ArgJ, chloroplastic of Vitis vinifera (Grape).